Reading from the N-terminus, the 196-residue chain is Venom platylysin (196 aa).

It belongs to the redulysin-like family. In terms of tissue distribution, expressed by the venom gland.

It is found in the secreted. Functionally, probable insecticidal toxin that has been detected in a semi-pure insecticidal fraction. This chain is Venom platylysin, found in Platymeris biguttatus (Two-spotted assassin bug).